Consider the following 342-residue polypeptide: MLSDLMINRDFLAYTLANPNQLPAAYDFMLADHTRVDVWDTGVIVFTPANATKDIVLSCAVHGNETAPIEICNQLIKDLLSQRIIAKQRVMFLIGNPTAILNKTRFIDENMNRLFSGAHSKGEGLSHPERHRAKALEQYVADFFNANSDNQRIHYDLHTAIRASKHEKFAIYPYRPGRAFSGEQIMFLAACGVDTMLFHHEPTTTFSYYSSQQFQADAFTVELGKVMPFGQNDMSRFAQTHTMLEKLITETKLAPVEFDPSKVNLYKVSRSINKHFDDFEFSFAGDAENFSAFSQGEVLATEGGNAIIVEYPQEAIVFPNANVPIGQRTVLCLVPAPNESIL.

H62, E65, and H158 together coordinate Zn(2+). The active site involves E222.

This sequence belongs to the AspA/AstE family. Succinylglutamate desuccinylase subfamily. Zn(2+) serves as cofactor.

The catalysed reaction is N-succinyl-L-glutamate + H2O = L-glutamate + succinate. It participates in amino-acid degradation; L-arginine degradation via AST pathway; L-glutamate and succinate from L-arginine: step 5/5. Transforms N(2)-succinylglutamate into succinate and glutamate. The protein is Succinylglutamate desuccinylase of Shewanella frigidimarina (strain NCIMB 400).